The primary structure comprises 501 residues: MFSNQYIQQRIHKANSLREEGKNPYQNGLKRSLTNAAFLEKYAYVKDLEEPKDKEKCESIVGRVKLLRLMGKACFIKVEDESAILQAYVSQNELNDEFKSLKKHLEVGDIVLVKGFPFATKTGELSVHALEFHILSKTIVPLPEKFHGLSDIELRYRQRYLDLIVNPGVKDVFKKRSLIVSSVRKFFEMEGFLEVETPMMHPIPGGANARPFITYHNALEVERYLRIAPELYLKRLIVGGFEAVFEINRNFRNEGMDHSHNPEFTMIEFYWAYHTYEDLIELSKRLFDYLLKTLNLPSKIIYNDMEVDFNQTSVISYLDALETIGGISKDILEKEDRLLAYLLEQGIKVEPNLTYGKLLAEAFDHFVEHQLINPTFVTQYPIEISPLARRNDSNPNIADRFELFIAGKEIANGFSELNDPLDQLERFKNQVAEKEKGDEEAQYMDEDYVWALAHGMPPTAGQGIGIDRLVMLLTGAKSIKDVILFPAMRPVKNDFNIESGE.

Glu-402 and Glu-409 together coordinate Mg(2+).

The protein belongs to the class-II aminoacyl-tRNA synthetase family. In terms of assembly, homodimer. It depends on Mg(2+) as a cofactor.

The protein resides in the cytoplasm. The enzyme catalyses tRNA(Lys) + L-lysine + ATP = L-lysyl-tRNA(Lys) + AMP + diphosphate. This is Lysine--tRNA ligase from Helicobacter pylori (strain HPAG1).